A 364-amino-acid polypeptide reads, in one-letter code: Probable dual-specificity RNA methyltransferase RlmN (364 aa).

Glu-107 functions as the Proton acceptor in the catalytic mechanism. In terms of domain architecture, Radical SAM core spans 113 to 346; that stretch reads HDYGNSVCVT…ATIRREQGSD (234 aa). The cysteines at positions 120 and 351 are disulfide-linked. Positions 127, 131, and 134 each coordinate [4Fe-4S] cluster. S-adenosyl-L-methionine contacts are provided by residues 177 to 178, Ser-209, 232 to 234, and Asn-308; these read GE and SLH. Cys-351 functions as the S-methylcysteine intermediate in the catalytic mechanism.

The protein belongs to the radical SAM superfamily. RlmN family. The cofactor is [4Fe-4S] cluster.

The protein resides in the cytoplasm. The enzyme catalyses adenosine(2503) in 23S rRNA + 2 reduced [2Fe-2S]-[ferredoxin] + 2 S-adenosyl-L-methionine = 2-methyladenosine(2503) in 23S rRNA + 5'-deoxyadenosine + L-methionine + 2 oxidized [2Fe-2S]-[ferredoxin] + S-adenosyl-L-homocysteine. The catalysed reaction is adenosine(37) in tRNA + 2 reduced [2Fe-2S]-[ferredoxin] + 2 S-adenosyl-L-methionine = 2-methyladenosine(37) in tRNA + 5'-deoxyadenosine + L-methionine + 2 oxidized [2Fe-2S]-[ferredoxin] + S-adenosyl-L-homocysteine. Its function is as follows. Specifically methylates position 2 of adenine 2503 in 23S rRNA and position 2 of adenine 37 in tRNAs. Confers resistance to some classes of antibiotics. The chain is Probable dual-specificity RNA methyltransferase RlmN from Staphylococcus aureus (strain Mu3 / ATCC 700698).